The primary structure comprises 85 residues: uncharacterized protein (85 aa).

Disordered stretches follow at residues 1 to 22 (MFAP…TSGF) and 41 to 85 (EKER…SFLR). Residues 75–85 (FPSNYRGSFLR) are compositionally biased toward polar residues.

This is an uncharacterized protein from Dryophytes versicolor (chameleon treefrog).